Here is a 171-residue protein sequence, read N- to C-terminus: Lipoprotein signal peptidase (171 aa).

The next 4 helical transmembrane spans lie at 12–32 (LAWL…KLYF), 42–62 (IVVI…AAFS), 70–90 (WQRW…VVWL), and 96–116 (NETW…GNLY). Catalysis depends on residues Asp126 and Asp145. Residues 137 to 157 (YFPAFNVADSAITVGAVMLAL) traverse the membrane as a helical segment.

It belongs to the peptidase A8 family.

The protein resides in the cell inner membrane. The enzyme catalyses Release of signal peptides from bacterial membrane prolipoproteins. Hydrolyzes -Xaa-Yaa-Zaa-|-(S,diacylglyceryl)Cys-, in which Xaa is hydrophobic (preferably Leu), and Yaa (Ala or Ser) and Zaa (Gly or Ala) have small, neutral side chains.. It participates in protein modification; lipoprotein biosynthesis (signal peptide cleavage). Functionally, this protein specifically catalyzes the removal of signal peptides from prolipoproteins. This is Lipoprotein signal peptidase from Pseudomonas putida (strain ATCC 47054 / DSM 6125 / CFBP 8728 / NCIMB 11950 / KT2440).